Here is a 73-residue protein sequence, read N- to C-terminus: Translation initiation factor IF-1 (73 aa).

The S1-like domain occupies 1–73 (MAKKDGAIEI…TRGRIVYRYK (73 aa)).

This sequence belongs to the IF-1 family. In terms of assembly, component of the 30S ribosomal translation pre-initiation complex which assembles on the 30S ribosome in the order IF-2 and IF-3, IF-1 and N-formylmethionyl-tRNA(fMet); mRNA recruitment can occur at any time during PIC assembly.

The protein localises to the cytoplasm. One of the essential components for the initiation of protein synthesis. Stabilizes the binding of IF-2 and IF-3 on the 30S subunit to which N-formylmethionyl-tRNA(fMet) subsequently binds. Helps modulate mRNA selection, yielding the 30S pre-initiation complex (PIC). Upon addition of the 50S ribosomal subunit IF-1, IF-2 and IF-3 are released leaving the mature 70S translation initiation complex. The polypeptide is Translation initiation factor IF-1 (Thermobifida fusca (strain YX)).